The primary structure comprises 430 residues: 5-methylthioadenosine/S-adenosylhomocysteine deaminase (430 aa).

Zn(2+) contacts are provided by His63 and His65. Substrate contacts are provided by Glu92, Arg144, and His182. His209 contacts Zn(2+). Glu212 and Asp297 together coordinate substrate. Asp297 is a binding site for Zn(2+).

Belongs to the metallo-dependent hydrolases superfamily. MTA/SAH deaminase family. Zn(2+) serves as cofactor.

The catalysed reaction is S-adenosyl-L-homocysteine + H2O + H(+) = S-inosyl-L-homocysteine + NH4(+). It carries out the reaction S-methyl-5'-thioadenosine + H2O + H(+) = S-methyl-5'-thioinosine + NH4(+). In terms of biological role, catalyzes the deamination of 5-methylthioadenosine and S-adenosyl-L-homocysteine into 5-methylthioinosine and S-inosyl-L-homocysteine, respectively. Is also able to deaminate adenosine. This is 5-methylthioadenosine/S-adenosylhomocysteine deaminase from Desulforudis audaxviator (strain MP104C).